Consider the following 459-residue polypeptide: Cysteine--tRNA ligase (459 aa).

C27 is a Zn(2+) binding site. The 'HIGH' region motif lies at 29 to 39 (PTVYDDAHLGH). Zn(2+) is bound by residues C202, H231, and E235. A 'KMSKS' region motif is present at residues 263–267 (KMSKS). K266 is a binding site for ATP.

The protein belongs to the class-I aminoacyl-tRNA synthetase family. As to quaternary structure, monomer. Zn(2+) serves as cofactor.

It is found in the cytoplasm. The catalysed reaction is tRNA(Cys) + L-cysteine + ATP = L-cysteinyl-tRNA(Cys) + AMP + diphosphate. The polypeptide is Cysteine--tRNA ligase (Campylobacter fetus subsp. fetus (strain 82-40)).